Consider the following 182-residue polypeptide: ATP synthase subunit delta (182 aa).

This sequence belongs to the ATPase delta chain family. F-type ATPases have 2 components, F(1) - the catalytic core - and F(0) - the membrane proton channel. F(1) has five subunits: alpha(3), beta(3), gamma(1), delta(1), epsilon(1). CF(0) has four main subunits: a(1), b(1), b'(1) and c(10-14). The alpha and beta chains form an alternating ring which encloses part of the gamma chain. F(1) is attached to F(0) by a central stalk formed by the gamma and epsilon chains, while a peripheral stalk is formed by the delta, b and b' chains.

It localises to the cellular thylakoid membrane. In terms of biological role, f(1)F(0) ATP synthase produces ATP from ADP in the presence of a proton or sodium gradient. F-type ATPases consist of two structural domains, F(1) containing the extramembraneous catalytic core and F(0) containing the membrane proton channel, linked together by a central stalk and a peripheral stalk. During catalysis, ATP synthesis in the catalytic domain of F(1) is coupled via a rotary mechanism of the central stalk subunits to proton translocation. Its function is as follows. This protein is part of the stalk that links CF(0) to CF(1). It either transmits conformational changes from CF(0) to CF(1) or is implicated in proton conduction. This chain is ATP synthase subunit delta, found in Trichodesmium erythraeum (strain IMS101).